The following is a 368-amino-acid chain: Glucose 1-dehydrogenase 2 (368 aa).

Cysteine 41 serves as a coordination point for Zn(2+). Threonine 43 contributes to the substrate binding site. Residues histidine 68 and glutamate 69 each contribute to the Zn(2+) site. Asparagine 91 is a substrate binding site. Cysteine 95, cysteine 98, cysteine 101, cysteine 109, and glutamine 152 together coordinate Zn(2+). Positions 152 and 156 each coordinate substrate. Residues asparagine 213–arginine 215, phenylalanine 279–phenylalanine 281, leucine 307–asparagine 309, and lysine 356 each bind NADP(+). Asparagine 309 lines the substrate pocket.

This sequence belongs to the zinc-containing alcohol dehydrogenase family. Glucose 1-dehydrogenase subfamily. The cofactor is Zn(2+).

The catalysed reaction is D-glucose + NAD(+) = D-glucono-1,5-lactone + NADH + H(+). It catalyses the reaction D-glucose + NADP(+) = D-glucono-1,5-lactone + NADPH + H(+). Functionally, catalyzes the NAD(P)(+)-dependent oxidation of D-glucose to D-gluconate via gluconolactone. Can utilize both NAD(+) and NADP(+) as electron acceptor. Is involved in the degradation of glucose through a non-phosphorylative variant of the Entner-Doudoroff pathway. The polypeptide is Glucose 1-dehydrogenase 2 (Saccharolobus solfataricus (strain ATCC 35092 / DSM 1617 / JCM 11322 / P2) (Sulfolobus solfataricus)).